Consider the following 539-residue polypeptide: Phosphoenolpyruvate carboxykinase (ATP) (539 aa).

Residues R64, Y206, and K212 each contribute to the substrate site. ATP-binding positions include K212, H231, and 247 to 255; that span reads GLSGTGKTT. The Mn(2+) site is built by K212 and H231. D268 contributes to the Mn(2+) binding site. ATP contacts are provided by residues E296, R332, 448 to 449, and T454; that span reads RI. R332 lines the substrate pocket.

The protein belongs to the phosphoenolpyruvate carboxykinase (ATP) family. As to quaternary structure, monomer. Mn(2+) serves as cofactor.

The protein localises to the cytoplasm. It carries out the reaction oxaloacetate + ATP = phosphoenolpyruvate + ADP + CO2. It participates in carbohydrate biosynthesis; gluconeogenesis. In terms of biological role, involved in the gluconeogenesis. Catalyzes the conversion of oxaloacetate (OAA) to phosphoenolpyruvate (PEP) through direct phosphoryl transfer between the nucleoside triphosphate and OAA. This is Phosphoenolpyruvate carboxykinase (ATP) from Hamiltonella defensa subsp. Acyrthosiphon pisum (strain 5AT).